The primary structure comprises 362 residues: Histidinol-phosphate aminotransferase (362 aa).

Residue Lys222 is modified to N6-(pyridoxal phosphate)lysine.

Belongs to the class-II pyridoxal-phosphate-dependent aminotransferase family. Histidinol-phosphate aminotransferase subfamily. In terms of assembly, homodimer. It depends on pyridoxal 5'-phosphate as a cofactor.

The enzyme catalyses L-histidinol phosphate + 2-oxoglutarate = 3-(imidazol-4-yl)-2-oxopropyl phosphate + L-glutamate. It functions in the pathway amino-acid biosynthesis; L-histidine biosynthesis; L-histidine from 5-phospho-alpha-D-ribose 1-diphosphate: step 7/9. The chain is Histidinol-phosphate aminotransferase from Shewanella amazonensis (strain ATCC BAA-1098 / SB2B).